The chain runs to 489 residues: MIPVVALVGRPNVGKSTLFNRLTRTRDALVADYPGLTRDRKYGRAHLSGYEFIVVDTGGIDGTEEGIETRMAEQSLAAIEEADVVLFLTDARAGLTAADEAIAEHLRRREKTTFVVANKVDGIDADSACGEFWALGLGEVYQMAAAQGRGVTNMIEYALTPYAEAMGLTRDGEGEEEADERQYTEEEAEAEQQRLQDLPIKLAIIGKPNVGKSTLTNRILGEERVVVYDEPGTTRDSIYIPLERDGQEYVIIDTAGVRRRSKVHETVEKFSVIKTLKAVEDANVVLLVVDAREGIAEQDLGLLGFALNVGRALVIAVNKWDGIDQDVKERVKSELDRRLGFIDFARIHFISALHGTGVGHLFESVEEAYESATRRVSTSMLTRIMQMAQDDHQPPLVNGRRVKLKYAHAGGYNPPIVVIHGNQVKKLPDSYKRFMMNYYRRSLKVMGTPIQVRFQEGGNPFEGLNTKKLTVSQERRRKRMMSHIKDKKK.

EngA-type G domains lie at 3–166 (PVVA…AEAM) and 200–373 (IKLA…ESAT). Residues 9–16 (GRPNVGKS), 56–60 (DTGGI), 118–121 (NKVD), 206–213 (GKPNVGKS), 253–257 (DTAGV), and 318–321 (NKWD) each bind GTP. Residues 374–458 (RRVSTSMLTR…PIQVRFQEGG (85 aa)) enclose the KH-like domain.

Belongs to the TRAFAC class TrmE-Era-EngA-EngB-Septin-like GTPase superfamily. EngA (Der) GTPase family. In terms of assembly, associates with the 50S ribosomal subunit.

In terms of biological role, GTPase that plays an essential role in the late steps of ribosome biogenesis. The polypeptide is GTPase Der (Shewanella loihica (strain ATCC BAA-1088 / PV-4)).